The following is a 148-amino-acid chain: Endoribonuclease YbeY (148 aa).

Residues His105, His109, and Asp115 each contribute to the Zn(2+) site.

The protein belongs to the endoribonuclease YbeY family. Zn(2+) is required as a cofactor.

Its subcellular location is the cytoplasm. In terms of biological role, single strand-specific metallo-endoribonuclease involved in late-stage 70S ribosome quality control and in maturation of the 3' terminus of the 16S rRNA. This is Endoribonuclease YbeY from Chlorobium phaeovibrioides (strain DSM 265 / 1930) (Prosthecochloris vibrioformis (strain DSM 265)).